A 122-amino-acid polypeptide reads, in one-letter code: Large ribosomal subunit protein uL14c (122 aa).

Belongs to the universal ribosomal protein uL14 family. In terms of assembly, part of the 50S ribosomal subunit.

Its subcellular location is the plastid. It is found in the chloroplast. Binds to 23S rRNA. In Piper cenocladum (Ant piper), this protein is Large ribosomal subunit protein uL14c.